A 281-amino-acid chain; its full sequence is Cell growth regulator with EF hand domain protein 1 (281 aa).

Residues 1–21 form the signal peptide; that stretch reads MSRWLMQMLMLPLLLLPLGQA. EF-hand domains are found at residues 71-106 and 115-150; these read NREQVLLYLFALHDFDQNGQLDGLELLSMLTAALAP and PVILVVDMVLETQDLDGDGLMTPAELINFPGEAPKR. Residues Asp84, Asp86, Asn88, Gln90, Glu95, Asp128, Asp130, Asp132, and Glu139 each coordinate Ca(2+). Positions 146 to 281 are disordered; that stretch reads EAPKRAESLP…HSIQLENDEI (136 aa). Over residues 169 to 184 the composition is skewed to polar residues; that stretch reads LLANSPLQSETQQSLG. Over residues 185 to 213 the composition is skewed to basic and acidic residues; that stretch reads TKEEITSQVEAKRALEPEQEAGHHIETKV. 2 positions are modified to phosphoserine: Ser217 and Ser228. Basic and acidic residues predominate over residues 234-256; that stretch reads GPREDAERQVESKDNEGEAKDLP.

In terms of processing, probably digested extracellularly by an unknown serine protease generating extremely hydrophobic bioactive peptides. Expressed predominantly in whole brain and kidney, with limited expression in heart, lung, liver, and skeletal muscle and no expression in spleen and testis. Also expressed in pituitary gland, adrenal gland, digestive tract, and reproductive organs.

It localises to the secreted. Mediates cell-cell adhesion in a calcium-dependent manner. Able to inhibit growth in several cell lines. The chain is Cell growth regulator with EF hand domain protein 1 from Rattus norvegicus (Rat).